We begin with the raw amino-acid sequence, 66 residues long: Large ribosomal subunit protein bL31 (66 aa).

Positions 16, 18, 36, and 39 each coordinate Zn(2+).

It belongs to the bacterial ribosomal protein bL31 family. Type A subfamily. Part of the 50S ribosomal subunit. The cofactor is Zn(2+).

Its function is as follows. Binds the 23S rRNA. The protein is Large ribosomal subunit protein bL31 of Geobacillus thermodenitrificans (strain NG80-2).